The sequence spans 271 residues: 5-deoxy-glucuronate isomerase (271 aa).

This sequence belongs to the isomerase IolB family.

It carries out the reaction 5-deoxy-D-glucuronate = 5-dehydro-2-deoxy-D-gluconate. The protein operates within polyol metabolism; myo-inositol degradation into acetyl-CoA; acetyl-CoA from myo-inositol: step 4/7. Functionally, involved in the isomerization of 5-deoxy-glucuronate (5DG) to 5-dehydro-2-deoxy-D-gluconate (DKG or 2-deoxy-5-keto-D-gluconate). This Shouchella clausii (strain KSM-K16) (Alkalihalobacillus clausii) protein is 5-deoxy-glucuronate isomerase.